A 369-amino-acid polypeptide reads, in one-letter code: 4-hydroxy-3-methylbut-2-en-1-yl diphosphate synthase (flavodoxin) (369 aa).

[4Fe-4S] cluster is bound by residues C270, C273, C305, and E312.

It belongs to the IspG family. [4Fe-4S] cluster is required as a cofactor.

It catalyses the reaction (2E)-4-hydroxy-3-methylbut-2-enyl diphosphate + oxidized [flavodoxin] + H2O + 2 H(+) = 2-C-methyl-D-erythritol 2,4-cyclic diphosphate + reduced [flavodoxin]. It functions in the pathway isoprenoid biosynthesis; isopentenyl diphosphate biosynthesis via DXP pathway; isopentenyl diphosphate from 1-deoxy-D-xylulose 5-phosphate: step 5/6. Functionally, converts 2C-methyl-D-erythritol 2,4-cyclodiphosphate (ME-2,4cPP) into 1-hydroxy-2-methyl-2-(E)-butenyl 4-diphosphate. This chain is 4-hydroxy-3-methylbut-2-en-1-yl diphosphate synthase (flavodoxin), found in Pseudomonas putida (strain ATCC 700007 / DSM 6899 / JCM 31910 / BCRC 17059 / LMG 24140 / F1).